Reading from the N-terminus, the 322-residue chain is Reticulocalbin-1 (322 aa).

The first 19 residues, 1–19, serve as a signal peptide directing secretion; the sequence is MDVLGFICAVFLGTVVLHA. A glycan (N-linked (GlcNAc...) asparagine) is linked at asparagine 44. EF-hand domains lie at 70 to 105, 106 to 141, 157 to 192, 194 to 229, 235 to 270, and 271 to 306; these read ESKD…VQKR, YVYE…YYLS, KMLP…EEFE, MKDI…HEDR, WVKT…QDYD, and HAQA…FVGS. The Ca(2+) site is built by aspartate 83, aspartate 85, asparagine 87, tyrosine 89, glutamate 94, aspartate 119, asparagine 121, aspartate 123, lysine 125, glutamate 130, aspartate 170, aspartate 172, aspartate 174, glutamate 181, aspartate 207, asparagine 209, aspartate 211, histidine 213, glutamate 218, aspartate 248, asparagine 250, aspartate 252, lysine 254, glutamate 259, aspartate 284, aspartate 286, aspartate 288, methionine 290, and glutamate 295. Residues 319–322 carry the Prevents secretion from ER motif; sequence HDEL.

It belongs to the CREC family.

Its subcellular location is the endoplasmic reticulum lumen. Its function is as follows. May regulate calcium-dependent activities in the endoplasmic reticulum lumen or post-ER compartment. In Takifugu rubripes (Japanese pufferfish), this protein is Reticulocalbin-1 (rcn1).